Here is a 143-residue protein sequence, read N- to C-terminus: Transcriptional regulator MraZ (143 aa).

2 consecutive SpoVT-AbrB domains span residues 5–47 (SHAP…PMAE) and 76–119 (AADD…DAQR).

This sequence belongs to the MraZ family. As to quaternary structure, forms oligomers.

The protein resides in the cytoplasm. It localises to the nucleoid. The polypeptide is Transcriptional regulator MraZ (Frankia casuarinae (strain DSM 45818 / CECT 9043 / HFP020203 / CcI3)).